The primary structure comprises 255 residues: Snake venom serine protease HS112 (255 aa).

The N-terminal stretch at 1–18 (MVLIRVIANLLILQLSYA) is a signal peptide. Positions 19 to 24 (QKSSEL) are excised as a propeptide. Residues 25–246 (VIGGDECDIN…YLPWIQSIIA (222 aa)) enclose the Peptidase S1 domain. 6 cysteine pairs are disulfide-bonded: cysteine 31–cysteine 162, cysteine 49–cysteine 65, cysteine 97–cysteine 253, cysteine 141–cysteine 207, cysteine 173–cysteine 186, and cysteine 197–cysteine 222. Active-site charge relay system residues include histidine 64 and aspartate 109. An N-linked (GlcNAc...) asparagine glycan is attached at asparagine 169. The Charge relay system role is filled by serine 201. N-linked (GlcNAc...) asparagine glycosylation occurs at asparagine 248.

Belongs to the peptidase S1 family. Snake venom subfamily. Monomer. As to expression, expressed by the venom gland.

The protein localises to the secreted. In terms of biological role, snake venom serine protease that may act in the hemostasis system of the prey. This is Snake venom serine protease HS112 from Bothrops jararaca (Jararaca).